The chain runs to 334 residues: Malate dehydrogenase (334 aa).

17–23 (GAAGQIG) is an NAD(+) binding site. The substrate site is built by R98 and R104. Residues N111, Q118, and 135–137 (VGN) contribute to the NAD(+) site. The substrate site is built by N137 and R168. H193 functions as the Proton acceptor in the catalytic mechanism.

It belongs to the LDH/MDH superfamily. MDH type 2 family.

The enzyme catalyses (S)-malate + NAD(+) = oxaloacetate + NADH + H(+). Functionally, catalyzes the reversible oxidation of malate to oxaloacetate. The polypeptide is Malate dehydrogenase (Deinococcus geothermalis (strain DSM 11300 / CIP 105573 / AG-3a)).